Reading from the N-terminus, the 240-residue chain is Caffeoyl-CoA O-methyltransferase 5 (240 aa).

Position 14 (Lys14) interacts with substrate. Residues Thr56, Glu78, 80–81 (GV), Ser86, Asp104, and Ala133 each bind S-adenosyl-L-methionine. Residue Asp156 participates in substrate binding. Asp156 is an a divalent metal cation binding site. Position 158 (Asp158) interacts with S-adenosyl-L-methionine. 2 residues coordinate a divalent metal cation: Asp182 and Asn183. Residue Asn187 participates in substrate binding.

It belongs to the class I-like SAM-binding methyltransferase superfamily. Cation-dependent O-methyltransferase family. CCoAMT subfamily. Mg(2+) is required as a cofactor. As to expression, expression steadily increases from the bottom to the top of the plant.

The catalysed reaction is (E)-caffeoyl-CoA + S-adenosyl-L-methionine = (E)-feruloyl-CoA + S-adenosyl-L-homocysteine + H(+). It participates in aromatic compound metabolism; phenylpropanoid biosynthesis. In terms of biological role, methylates caffeoyl-CoA to feruloyl-CoA and 5-hydroxyferuloyl-CoA to sinapoyl-CoA. Plays a role in the synthesis of feruloylated polysaccharides. Involved in the reinforcement of the plant cell wall. Also involved in the responding to wounding or pathogen challenge by the increased formation of cell wall-bound ferulic acid polymers. Methylates 5-hydroxyferulolyl-CoA more efficiently than caffeoyl-CoA. The polypeptide is Caffeoyl-CoA O-methyltransferase 5 (CCOAOMT5) (Nicotiana tabacum (Common tobacco)).